We begin with the raw amino-acid sequence, 103 residues long: Histone H4 (103 aa).

A compositionally biased stretch (gly residues) spans 1–14 (MTGRGKGGKGLGKG). The segment at 1–20 (MTGRGKGGKGLGKGGAKRHR) is disordered. N6-acetyl-N6-methyllysine; alternate is present on residues K6 and K13. A DNA-binding region spans residues 17–21 (KRHRK).

Belongs to the histone H4 family. In terms of assembly, the nucleosome is a histone octamer containing two molecules each of H2A, H2B, H3 and H4 assembled in one H3-H4 heterotetramer and two H2A-H2B heterodimers. The octamer wraps approximately 147 bp of DNA.

It localises to the nucleus. The protein localises to the chromosome. Its function is as follows. Core component of nucleosome. Nucleosomes wrap and compact DNA into chromatin, limiting DNA accessibility to the cellular machineries which require DNA as a template. Histones thereby play a central role in transcription regulation, DNA repair, DNA replication and chromosomal stability. DNA accessibility is regulated via a complex set of post-translational modifications of histones, also called histone code, and nucleosome remodeling. The chain is Histone H4 from Trichogramma cacaeciae (Moth egg parasite).